A 183-amino-acid chain; its full sequence is Peptide deformylase (183 aa).

2 residues coordinate Fe cation: C111 and H154. E155 is a catalytic residue. H158 contacts Fe cation.

The cofactor is Fe(2+).

The catalysed reaction is N-terminal N-formyl-L-methionyl-[peptide] + H2O = N-terminal L-methionyl-[peptide] + formate. Functionally, removes the formyl group from the N-terminal Met of newly synthesized proteins. Requires at least a dipeptide for an efficient rate of reaction. N-terminal L-methionine is a prerequisite for activity but the enzyme has broad specificity at other positions. The protein is Peptide deformylase of Staphylococcus aureus.